Here is a 327-residue protein sequence, read N- to C-terminus: Tryptophan--tRNA ligase (327 aa).

Residues 9–11 (RPT) and 17–18 (GN) each bind ATP. The 'HIGH' region motif lies at 10-18 (PTGNLHLGN). Residue D133 participates in L-tryptophan binding. Residues 145-147 (GKD), V186, and 194-198 (KMGKS) contribute to the ATP site. A 'KMSKS' region motif is present at residues 194-198 (KMGKS).

It belongs to the class-I aminoacyl-tRNA synthetase family. As to quaternary structure, homodimer.

It localises to the cytoplasm. The catalysed reaction is tRNA(Trp) + L-tryptophan + ATP = L-tryptophyl-tRNA(Trp) + AMP + diphosphate + H(+). Its function is as follows. Catalyzes the attachment of tryptophan to tRNA(Trp). This chain is Tryptophan--tRNA ligase, found in Porphyromonas gingivalis (strain ATCC BAA-308 / W83).